A 477-amino-acid polypeptide reads, in one-letter code: Aspartyl/glutamyl-tRNA(Asn/Gln) amidotransferase subunit B (477 aa).

It belongs to the GatB/GatE family. GatB subfamily. Heterotrimer of A, B and C subunits.

It carries out the reaction L-glutamyl-tRNA(Gln) + L-glutamine + ATP + H2O = L-glutaminyl-tRNA(Gln) + L-glutamate + ADP + phosphate + H(+). It catalyses the reaction L-aspartyl-tRNA(Asn) + L-glutamine + ATP + H2O = L-asparaginyl-tRNA(Asn) + L-glutamate + ADP + phosphate + 2 H(+). In terms of biological role, allows the formation of correctly charged Asn-tRNA(Asn) or Gln-tRNA(Gln) through the transamidation of misacylated Asp-tRNA(Asn) or Glu-tRNA(Gln) in organisms which lack either or both of asparaginyl-tRNA or glutaminyl-tRNA synthetases. The reaction takes place in the presence of glutamine and ATP through an activated phospho-Asp-tRNA(Asn) or phospho-Glu-tRNA(Gln). The sequence is that of Aspartyl/glutamyl-tRNA(Asn/Gln) amidotransferase subunit B from Legionella pneumophila subsp. pneumophila (strain Philadelphia 1 / ATCC 33152 / DSM 7513).